The sequence spans 97 residues: HssA/B-like protein 32 (97 aa).

2 disordered regions span residues 1-23 (MTLF…SLAS) and 62-97 (AKSS…GSCS). Residues 62-74 (AKSSGGSCGGKGG) are compositionally biased toward gly residues. Basic residues predominate over residues 75 to 88 (SHNHGHGHGPHGHG).

The protein belongs to the hssA/B family.

The polypeptide is HssA/B-like protein 32 (hssl32) (Dictyostelium discoideum (Social amoeba)).